We begin with the raw amino-acid sequence, 330 residues long: AH receptor-interacting protein (330 aa).

The PPIase FKBP-type domain maps to 31-121 (GTKATFHYRT…KDPLEGQRHC (91 aa)). Ser43 carries the post-translational modification Phosphoserine. 3 TPR repeats span residues 179–212 (VPLI…LKNL), 231–264 (TPLL…YDDN), and 265–298 (VKAY…DPAL).

In terms of assembly, interacts with RET in the pituitary gland; this interaction prevents the formation of the AIP-survivin complex. Widely expressed. Higher levels seen in the heart, placenta and skeletal muscle. Not expressed in the liver.

The protein resides in the cytoplasm. In terms of biological role, may play a positive role in AHR-mediated (aromatic hydrocarbon receptor) signaling, possibly by influencing its receptivity for ligand and/or its nuclear targeting. Functionally, cellular negative regulator of the hepatitis B virus (HBV) X protein. This Homo sapiens (Human) protein is AH receptor-interacting protein (AIP).